The chain runs to 301 residues: N-acetylmuramic acid 6-phosphate etherase (301 aa).

The region spanning isoleucine 57 to lysine 220 is the SIS domain. Glutamate 85 acts as the Proton donor in catalysis. Glutamate 116 is a catalytic residue.

Belongs to the GCKR-like family. MurNAc-6-P etherase subfamily. In terms of assembly, homodimer.

It catalyses the reaction N-acetyl-D-muramate 6-phosphate + H2O = N-acetyl-D-glucosamine 6-phosphate + (R)-lactate. It functions in the pathway amino-sugar metabolism; 1,6-anhydro-N-acetylmuramate degradation. It participates in amino-sugar metabolism; N-acetylmuramate degradation. Its pathway is cell wall biogenesis; peptidoglycan recycling. Specifically catalyzes the cleavage of the D-lactyl ether substituent of MurNAc 6-phosphate, producing GlcNAc 6-phosphate and D-lactate. Together with AnmK, is also required for the utilization of anhydro-N-acetylmuramic acid (anhMurNAc) either imported from the medium or derived from its own cell wall murein, and thus plays a role in cell wall recycling. The sequence is that of N-acetylmuramic acid 6-phosphate etherase from Photobacterium profundum (strain SS9).